Here is a 183-residue protein sequence, read N- to C-terminus: Ion-translocating oxidoreductase complex subunit B (183 aa).

Residues 1–23 form a hydrophobic region; sequence MLSALLVMAAIAVVLGAALGFAA. The 60-residue stretch at 29 to 88 folds into the 4Fe-4S domain; it reads EGDPLVDKIDAILPQTQCGQCGYPGCKPYAQAIAQGEADINQCPPGGEEGVRKLADLLGR. [4Fe-4S] cluster is bound by residues Cys-46, Cys-49, Cys-54, Cys-71, Cys-113, Cys-116, Cys-119, Cys-123, Cys-143, Cys-146, Cys-149, and Cys-153. 4Fe-4S ferredoxin-type domains lie at 104 to 133 and 135 to 163; these read AVAY…GAAK and MHTV…MEPV.

It belongs to the 4Fe4S bacterial-type ferredoxin family. RnfB subfamily. The complex is composed of six subunits: RnfA, RnfB, RnfC, RnfD, RnfE and RnfG. It depends on [4Fe-4S] cluster as a cofactor.

It is found in the cell inner membrane. Part of a membrane-bound complex that couples electron transfer with translocation of ions across the membrane. This is Ion-translocating oxidoreductase complex subunit B from Azoarcus sp. (strain BH72).